We begin with the raw amino-acid sequence, 104 residues long: Small ribosomal subunit protein uS10 (104 aa).

It belongs to the universal ribosomal protein uS10 family. In terms of assembly, part of the 30S ribosomal subunit.

Functionally, involved in the binding of tRNA to the ribosomes. The protein is Small ribosomal subunit protein uS10 of Maricaulis maris (strain MCS10) (Caulobacter maris).